Consider the following 201-residue polypeptide: ATP-dependent Clp protease proteolytic subunit (201 aa).

S105 serves as the catalytic Nucleophile. H130 is an active-site residue.

The protein belongs to the peptidase S14 family. Fourteen ClpP subunits assemble into 2 heptameric rings which stack back to back to give a disk-like structure with a central cavity, resembling the structure of eukaryotic proteasomes.

Its subcellular location is the cytoplasm. The catalysed reaction is Hydrolysis of proteins to small peptides in the presence of ATP and magnesium. alpha-casein is the usual test substrate. In the absence of ATP, only oligopeptides shorter than five residues are hydrolyzed (such as succinyl-Leu-Tyr-|-NHMec, and Leu-Tyr-Leu-|-Tyr-Trp, in which cleavage of the -Tyr-|-Leu- and -Tyr-|-Trp bonds also occurs).. Cleaves peptides in various proteins in a process that requires ATP hydrolysis. Has a chymotrypsin-like activity. Plays a major role in the degradation of misfolded proteins. The chain is ATP-dependent Clp protease proteolytic subunit from Acinetobacter baylyi (strain ATCC 33305 / BD413 / ADP1).